A 126-amino-acid chain; its full sequence is Large ribosomal subunit protein bL19 (126 aa).

Belongs to the bacterial ribosomal protein bL19 family.

In terms of biological role, this protein is located at the 30S-50S ribosomal subunit interface and may play a role in the structure and function of the aminoacyl-tRNA binding site. This Gluconacetobacter diazotrophicus (strain ATCC 49037 / DSM 5601 / CCUG 37298 / CIP 103539 / LMG 7603 / PAl5) protein is Large ribosomal subunit protein bL19.